The primary structure comprises 615 residues: NEDD8 ultimate buster 1 (615 aa).

Coiled coils occupy residues 36 to 70 (LALK…AIER) and 152 to 203 (KAMV…AAET). UBA domains are found at residues 374 to 413 (YIDP…HITN), 424 to 470 (EEKE…LLSN), and 489 to 529 (SPSQ…LAHN). The Nuclear localization signal signature appears at 414-431 (RREELAQIRKEEKEKKRR). Residues 427-474 (EKKRRRLENIRFLKGMGYSTHAAQQVLHAASGNLDEALKILLSNPQMW) are NEDD8-binding 1. The interval 532-586 (SLPPELPLSPEDSLSPPATSPSDSAGTSSASTDEDMETEAVNEILEDIPEHEEDY) is disordered. The segment covering 539 to 562 (LSPEDSLSPPATSPSDSAGTSSAS) has biased composition (low complexity). Residues 550 to 598 (TSPSDSAGTSSASTDEDMETEAVNEILEDIPEHEEDYLDSTLEDEEIII) form an NEDD8-binding 2 region. Positions 563-586 (TDEDMETEAVNEILEDIPEHEEDY) are enriched in acidic residues.

As to quaternary structure, directly interacts with NEDD8 and PSMD4/S5a, a member of the regulatory subunit of the 26S proteasome. Isoform 1 binds to NEDD8 more efficiently than isoform 2. Interacts with AIPL1. The interaction with UBD via UBA domains facilitates the linking of UBD-conjugated target protein to the proteasome complex and accelerates UBD degradation and that of its conjugates. As to expression, widely expressed with lowest expression in the pancreas for isoform 1 and in leukocytes, liver, prostate and skeletal muscle for isoform 2.

The protein resides in the nucleus. Specific down-regulator of the NEDD8 conjugation system. Recruits NEDD8, UBD, and their conjugates to the proteasome for degradation. Isoform 1 promotes the degradation of NEDD8 more efficiently than isoform 2. This Homo sapiens (Human) protein is NEDD8 ultimate buster 1 (NUB1).